The sequence spans 493 residues: Glutamyl-tRNA(Gln) amidotransferase subunit A (493 aa).

Residues Lys79 and Ser159 each act as charge relay system in the active site. The active-site Acyl-ester intermediate is Ser183.

The protein belongs to the amidase family. GatA subfamily. In terms of assembly, heterotrimer of A, B and C subunits.

It catalyses the reaction L-glutamyl-tRNA(Gln) + L-glutamine + ATP + H2O = L-glutaminyl-tRNA(Gln) + L-glutamate + ADP + phosphate + H(+). Functionally, allows the formation of correctly charged Gln-tRNA(Gln) through the transamidation of misacylated Glu-tRNA(Gln) in organisms which lack glutaminyl-tRNA synthetase. The reaction takes place in the presence of glutamine and ATP through an activated gamma-phospho-Glu-tRNA(Gln). The polypeptide is Glutamyl-tRNA(Gln) amidotransferase subunit A (Sinorhizobium medicae (strain WSM419) (Ensifer medicae)).